The sequence spans 408 residues: Peptidase T (408 aa).

Residue His78 participates in Zn(2+) binding. The active site involves Asp80. Asp141 contacts Zn(2+). The active-site Proton acceptor is Glu175. The Zn(2+) site is built by Glu176, Asp198, and His380.

Belongs to the peptidase M20B family. Zn(2+) is required as a cofactor.

The protein resides in the cytoplasm. It carries out the reaction Release of the N-terminal residue from a tripeptide.. Functionally, cleaves the N-terminal amino acid of tripeptides. The polypeptide is Peptidase T (Clostridium botulinum (strain Kyoto / Type A2)).